The chain runs to 275 residues: Provicilin (275 aa).

The span at 1-17 (DNAEIEKILLEEHEKET) shows a compositional bias: basic and acidic residues. Disordered stretches follow at residues 1 to 71 (DNAE…LKSS) and 134 to 164 (LVGQRNENQQGLREEDDEEEEQREEETKNQV). Positions 50 to 63 (NAKSSSKKSVSSRS) are enriched in low complexity. The region spanning 66-238 (FNLKSSDPIY…TFPGSAQEVD (173 aa)) is the Cupin type-1 domain. The span at 147-157 (EEDDEEEEQRE) shows a compositional bias: acidic residues.

It belongs to the 7S seed storage protein family.

The protein resides in the vacuole. Its subcellular location is the aleurone grain. Seed storage protein. This chain is Provicilin, found in Pisum sativum (Garden pea).